The following is a 134-amino-acid chain: Lymphocyte antigen 6S (134 aa).

The signal sequence occupies residues 1–26 (MSSLQAMKTLSLVLLVALLSMERAQG). The UPAR/Ly6 domain maps to 28-76 (RCYRCLAVLEGASCSVVSCPFLDGVCVSQKVSVFGSKVRGENKLSLLSC). Intrachain disulfides connect Cys29–Cys53, Cys32–Cys41, Cys76–Cys98, and Cys99–Cys104. Asn105 carries the GPI-anchor amidated asparagine lipid modification. Residues 106–134 (AVVLAASSPWALCVQLLLSLGSVFLWALL) constitute a propeptide, removed in mature form.

The protein localises to the cell membrane. The protein is Lymphocyte antigen 6S of Homo sapiens (Human).